The primary structure comprises 789 residues: Ent-kaur-16-ene synthase, chloroplastic (789 aa).

Residues Asp-536, Asp-540, Asn-680, Ser-684, and Glu-688 each contribute to the Mg(2+) site. The DDXXD motif signature appears at 536-540 (DDFYD).

Belongs to the terpene synthase family. It depends on Mg(2+) as a cofactor. Post-translationally, the N-terminus is blocked. In terms of tissue distribution, abundant in most tissues. Present in low amounts in mature cotyledons.

The protein resides in the plastid. The protein localises to the chloroplast. The catalysed reaction is ent-copalyl diphosphate = ent-kaur-16-ene + diphosphate. It functions in the pathway plant hormone biosynthesis; gibberellin biosynthesis. Its function is as follows. Catalyzes the conversion of ent-copalyl diphosphate to the gibberellin precursor ent-kaur-16-ene. This is Ent-kaur-16-ene synthase, chloroplastic from Cucurbita maxima (Pumpkin).